A 100-amino-acid polypeptide reads, in one-letter code: uncharacterized protein (100 aa).

The helical transmembrane segment at 68 to 88 (VFLFFFTGSSPSFPAALLGLF) threads the bilayer.

The protein localises to the membrane. This is an uncharacterized protein from Saccharomyces cerevisiae (strain ATCC 204508 / S288c) (Baker's yeast).